The primary structure comprises 90 residues: RING finger protein Z (90 aa).

The N-myristoyl glycine; by host moiety is linked to residue G2. The RING-type; atypical zinc-finger motif lies at 32–68 (CKSCWQKFDSLVRCHDHYLCRHCLNLLLSVSDRCPLC). Positions 85–88 (PPPY) match the PPXY motif motif.

It belongs to the arenaviridae Z protein family. As to quaternary structure, interacts with protein NP; this interaction probably directs the encapsidated genome to budding sites. Interacts (via RING-type zinc finger) with polymerase L; this interaction inhibits viral transcription and replication, Z partially blocks the product exit tunnel for the releasing nascent RNA product. Interacts with the glycoprotein complex; this interaction plays a role in virion budding. Interacts (via RING-type zinc finger) with host EIF4E; this interaction results in conformational changes of both interacting proteins and reduces EIF4E affinity for its substrate, the 5'-m7 G cap structure. Interacts (via late-budding domain) with host TSG101; this interaction is essential for budding and release of viral particles. Interacts with host RPLP0; this interaction may serve to load ribosome-like particles inside the virion. Interacts with host PML; this interaction induces PML bodies redistribution in the cytoplasm upon viral infection. Post-translationally, myristoylation is required for the role of RING finger protein Z in assembly and budding.

The protein resides in the virion. The protein localises to the host cytoplasm. It localises to the host perinuclear region. Its subcellular location is the host cell membrane. Functionally, plays a crucial role in virion assembly and budding. Expressed late in the virus life cycle, it acts as an inhibitor of viral transcription and RNA synthesis by interacting with the viral polymerase L. Presumably recruits the NP encapsidated genome to cellular membranes at budding sites via direct interaction with NP. Plays critical roles in the final steps of viral release by interacting with host TSG101, a member of the vacuolar protein-sorting pathway and using other cellular host proteins involved in vesicle formation pathway. The budding of the virus progeny occurs after association of protein Z with the viral glycoprotein complex SSP-GP1-GP2 at the cell periphery, step that requires myristoylation of protein Z. Also selectively represses protein production by associating with host EIF4E. In cell-based minigenome assay, has an inhibitory effect on the ribonucleoprotein machinery (vRNP), which is responsible for the replication and transcription of the viral genome. This is RING finger protein Z from Homo sapiens (Human).